A 328-amino-acid polypeptide reads, in one-letter code: Beta-ketoacyl-[acyl-carrier-protein] synthase III (328 aa).

Catalysis depends on residues cysteine 122 and histidine 255. Residues 256–260 (QANIR) form an ACP-binding region. Asparagine 285 is an active-site residue.

Belongs to the thiolase-like superfamily. FabH family. In terms of assembly, homodimer.

It is found in the cytoplasm. The enzyme catalyses malonyl-[ACP] + acetyl-CoA + H(+) = 3-oxobutanoyl-[ACP] + CO2 + CoA. It participates in lipid metabolism; fatty acid biosynthesis. Functionally, catalyzes the condensation reaction of fatty acid synthesis by the addition to an acyl acceptor of two carbons from malonyl-ACP. Catalyzes the first condensation reaction which initiates fatty acid synthesis and may therefore play a role in governing the total rate of fatty acid production. Possesses both acetoacetyl-ACP synthase and acetyl transacylase activities. Its substrate specificity determines the biosynthesis of branched-chain and/or straight-chain of fatty acids. This Polynucleobacter necessarius subsp. necessarius (strain STIR1) protein is Beta-ketoacyl-[acyl-carrier-protein] synthase III.